Reading from the N-terminus, the 260-residue chain is Carbonic anhydrase 2 (260 aa).

Serine 2 carries the N-acetylserine modification. Residue serine 2 is modified to Phosphoserine. The region spanning 3-259 is the Alpha-carbonic anhydrase domain; the sequence is HHWGYGKHNG…LKNRQIKASF (257 aa). The active-site Proton donor/acceptor is the histidine 64. The Zn(2+) site is built by histidine 94, histidine 96, and histidine 119. Phosphoserine is present on residues serine 165 and serine 172. 198-199 is a substrate binding site; the sequence is TT.

The protein belongs to the alpha-carbonic anhydrase family. As to quaternary structure, interacts with SLC4A4. Interaction with SLC4A7 regulates SLC4A7 transporter activity. Interacts with SLC26A6 isoform 4 (via C-terminus cytoplasmic domain). Zn(2+) is required as a cofactor. Requires Co(2+) as cofactor.

Its subcellular location is the cytoplasm. It localises to the cell membrane. It catalyses the reaction hydrogencarbonate + H(+) = CO2 + H2O. The enzyme catalyses urea = cyanamide + H2O. Its activity is regulated as follows. Activated by X-ray, histamine, L-adrenaline, L- and D-phenylalanine, L- and D-histidine, L-His-OMe and beta-Ala-His (carnosine). Competitively inhibited by saccharin, thioxolone, coumarins, 667-coumate, celecoxib (Celebrex), valdecoxib (Bextra), SC-125, SC-560, diclofenac, acetate, azide, bromide, sulfonamide derivatives such as acetazolamide (AZA), methazolamide (MZA), ethoxzolamide (EZA), dichlorophenamide (DCP), brinzolamide, dansylamide, thiabendazole-5-sulfonamide, trifluoromethane sulfonamide and N-hydroxysulfamide, fructose-based sugar sulfamate RWJ-37497, and Foscarnet (phosphonoformate trisodium salt). Repressed strongly by hydrogen sulfide(HS) and weakly by nitrate (NO(3)). Esterase activity weakly reduced by cyanamide. N-hydroxyurea interferes with zinc binding and inhibit activity. Catalyzes the reversible hydration of carbon dioxide. Can also hydrate cyanamide to urea. Stimulates the chloride-bicarbonate exchange activity of SLC26A6. Essential for bone resorption and osteoclast differentiation. Involved in the regulation of fluid secretion into the anterior chamber of the eye. Contributes to intracellular pH regulation in the duodenal upper villous epithelium during proton-coupled peptide absorption. In Homo sapiens (Human), this protein is Carbonic anhydrase 2 (CA2).